Reading from the N-terminus, the 194-residue chain is MSQPDARPGSKAREEALEQWVEERKKKRIAEKELRRINKKIKKLEDENPWLGNIVGMLRKKKDEEGGPPAKRPRREDMEIDSTPGRKSKARGFTDQERRDHRRRKALENKKKQLAGGGKNLSREEEEELRRLARDDDERERRVAGPRPGGVNPMDGPPRGAPGGGFVPSLQGVPESPFSRTGEGIDIRGTQQFP.

Residue serine 2 is modified to Phosphoserine; by host CK2. Residues 12–59 (AREEALEQWVEERKKKRIAEKELRRINKKIKKLEDENPWLGNIVGMLR) form a dimerization region. Arginine 13 is modified (omega-N-methylated arginine; by host PRMT1). The HDAg domain occupies 20-194 (WVEERKKKRI…IDIRGTQQFP (175 aa)). The disordered stretch occupies residues 45-194 (EDENPWLGNI…IDIRGTQQFP (150 aa)). A Nuclear localization signal motif is present at residues 65–74 (EGGPPAKRPR). At lysine 71 the chain carries N6-acetyllysine; by host. Positions 96 to 106 (QERRDHRRRKA) are RNA-binding. Position 122 is a phosphoserine; by host (serine 122). Residues 128–143 (ELRRLARDDDERERRV) show a composition bias toward basic and acidic residues. The tract at residues 129–194 (LRRLARDDDE…IDIRGTQQFP (66 aa)) is RNAPII-binding. Positions 135–145 (DDDERERRVAG) are RNA-binding. A Phosphoserine; by host MAPK1 and MAPK3 modification is found at serine 176. Threonine 181 carries the phosphothreonine; by host modification.

Belongs to the hepatitis delta antigen family. In terms of assembly, homodimer. Homooctamer. Interacts with host RNA polymerase II complex, and with host NPM1. Post-translationally, phosphorylated at serines and threonines by host MAPK1/3, PKR, and CK2. In terms of processing, acetylation modulates nuclear localization. Neo-synthesized genomic RNA migrates from the nucleus to the cytoplasm, where they interact with S-HDAg, which once acetylated redirect both partners to the nucleus. Methylation plays a role in viral genome replication.

Its subcellular location is the virion. The protein resides in the host nucleus. Its function is as follows. Promotes both transcription and replication of genomic RNA. Following virus entry into host cell, provides nuclear import of HDV RNPs thanks to its nuclear localization signal. May interact with host RNA polymerase II thereby changing its template requirement from DNA to RNA. RNA pol II complex would then acts as an RNA-directed RNA polymerase, and transcribe and replicate HDV genome. The sequence is that of Small delta antigen from Homo sapiens (Human).